The primary structure comprises 748 residues: Rho GTPase-activating protein 24 (748 aa).

The region spanning 18-124 (NATKCGWLRK…WVKSIRRVIW (107 aa)) is the PH domain. Residues 134–328 (QKLEDTVRYE…VMISKHDRLF (195 aa)) form the Rho-GAP domain. Residues 328 to 476 (FPKDTEPQSK…SSGTKMGTHS (149 aa)) form a disordered region. Composition is skewed to polar residues over residues 335-347 (QSKPQEGPNSNNN) and 356-368 (GQLQNKENNNTKE). Phosphoserine occurs at positions 369, 391, 396, 398, 402, 413, 415, and 437. Residues 369–381 (SPVRRCSWDKPES) show a composition bias toward basic and acidic residues. Positions 382 to 405 (PQRSSMDNGSPTALSGSKTNSPRN) are enriched in polar residues. A compositionally biased stretch (polar residues) spans 432 to 476 (IVTNGSFSSSNAEGVEKTQTTPNGSLQARRTSSLKSSGTKMGTHS). Thr-452 carries the post-translational modification Phosphothreonine. Ser-495 is modified (phosphoserine). The interval 582-640 (DFYGGNFEDPVLDGPPQDDLSHPGDYENKSDRRSVGGRSSRATSSSDNSETFVGNTSSN) is disordered. Positions 600 to 615 (DLSHPGDYENKSDRRS) are enriched in basic and acidic residues. Positions 617 to 630 (GGRSSRATSSSDNS) are enriched in low complexity. The segment covering 631-640 (ETFVGNTSSN) has biased composition (polar residues). A coiled-coil region spans residues 649 to 729 (SSLKQEMTKQ…KEMEQFFSTF (81 aa)).

As to quaternary structure, interacts with FLNA. Phosphorylated by ROCK, leading to activate the RacGAP activity.

Its subcellular location is the cytoplasm. It localises to the cytoskeleton. It is found in the cell junction. The protein resides in the adherens junction. The protein localises to the focal adhesion. Its subcellular location is the cell projection. Its function is as follows. Rho GTPase-activating protein involved in cell polarity, cell morphology and cytoskeletal organization. Acts as a GTPase activator for the Rac-type GTPase by converting it to an inactive GDP-bound state. Controls actin remodeling by inactivating Rac downstream of Rho leading to suppress leading edge protrusion and promotes cell retraction to achieve cellular polarity. Able to suppress RAC1 and CDC42 activity in vitro. Overexpression induces cell rounding with partial or complete disruption of actin stress fibers and formation of membrane ruffles, lamellipodia, and filopodia. Isoform 2 is a vascular cell-specific GAP involved in modulation of angiogenesis. This chain is Rho GTPase-activating protein 24 (Arhgap24), found in Rattus norvegicus (Rat).